A 296-amino-acid polypeptide reads, in one-letter code: Chondrolectin (296 aa).

Positions 1–20 (MRATLRILCALTFLVSCSRG) are cleaved as a signal peptide. Topologically, residues 21-238 (ARVVSGQTVC…RLIIAGPSSM (218 aa)) are extracellular. One can recognise a C-type lectin domain in the interval 38 to 187 (CYKIAYFKDV…CNMKHNFICK (150 aa)). Basic and acidic residues predominate over residues 197–221 (VQSDRPGGHDVDLSTEDKEDRRTPP). Positions 197-229 (VQSDRPGGHDVDLSTEDKEDRRTPPTDEDESPR) are disordered. Residues 239-266 (LLIYVIIPTIPLLLLILVASGTCCFQML) traverse the membrane as a helical segment. Over 267 to 296 (SKSKPRTKTSVNQSTLWISKTPKIDSGMEV) the chain is Cytoplasmic.

As to expression, expressed in developing motor neurons.

It localises to the membrane. In terms of biological role, plays a role in the development of the nervous system such as in neurite outgrowth and elongation. Involved in motor axon growth and guidance. Required for correct interactions of motor axons with the horizontal myoseptum. The polypeptide is Chondrolectin (chodl) (Danio rerio (Zebrafish)).